The following is a 590-amino-acid chain: Bacillolysin (590 aa).

An N-terminal signal peptide occupies residues 1 to 24 (MKKVWFSLLGGAMLLGSVASGASA). Positions 25-286 (ESSVSGPAQL…GSIVFQYDII (262 aa)) are cleaved as a propeptide — activation peptide. The Ca(2+) site is built by Asp-339, Asp-341, and Asp-419. Zn(2+) is bound at residue His-423. Residue Glu-424 is part of the active site. Residues His-427 and Glu-447 each coordinate Zn(2+). Positions 466, 469, 470, 473, and 476 each coordinate Ca(2+). His-507 (proton donor) is an active-site residue.

Belongs to the peptidase M4 family. The cofactor is Ca(2+). It depends on Zn(2+) as a cofactor.

Its subcellular location is the secreted. The catalysed reaction is Similar, but not identical, to that of thermolysin.. Functionally, involved in the generation of beta- and alpha-amylases from the large amylase precursor. The sequence is that of Bacillolysin (npr) from Paenibacillus polymyxa (Bacillus polymyxa).